Reading from the N-terminus, the 213-residue chain is Octanoyltransferase (213 aa).

In terms of domain architecture, BPL/LPL catalytic spans 32 to 207 (DHTPDEIWLV…KLLALLNNPP (176 aa)). Residues 71–78 (RGGQVTYH), 138–140 (SLG), and 151–153 (GLA) contribute to the substrate site. Cys-169 acts as the Acyl-thioester intermediate in catalysis.

The protein belongs to the LipB family.

Its subcellular location is the cytoplasm. The catalysed reaction is octanoyl-[ACP] + L-lysyl-[protein] = N(6)-octanoyl-L-lysyl-[protein] + holo-[ACP] + H(+). Its pathway is protein modification; protein lipoylation via endogenous pathway; protein N(6)-(lipoyl)lysine from octanoyl-[acyl-carrier-protein]: step 1/2. Catalyzes the transfer of endogenously produced octanoic acid from octanoyl-acyl-carrier-protein onto the lipoyl domains of lipoate-dependent enzymes. Lipoyl-ACP can also act as a substrate although octanoyl-ACP is likely to be the physiological substrate. The chain is Octanoyltransferase from Enterobacter sp. (strain 638).